A 910-amino-acid polypeptide reads, in one-letter code: Inactive disease susceptibility protein LOV1 (910 aa).

The stretch at 22-60 (ARLNGIGEQVDGLKRQLGRLQSLLKDADAKKHESERVRN) forms a coiled coil. Residues 169-461 (EQSVEALAGH…AAEGIITSSD (293 aa)) enclose the NB-ARC domain. LRR repeat units follow at residues 584 to 609 (LPLL…IGDL), 610 to 632 (IHLR…LRNL), and 634 to 655 (LLLY…LKEM).

Belongs to the disease resistance NB-LRR family. RPP8/HRT subfamily.

This is Inactive disease susceptibility protein LOV1 (LOV1) from Arabidopsis thaliana (Mouse-ear cress).